Reading from the N-terminus, the 216-residue chain is Ribosomal RNA large subunit methyltransferase E (216 aa).

S-adenosyl-L-methionine contacts are provided by glycine 71, tryptophan 73, aspartate 88, aspartate 104, and aspartate 126. Lysine 166 functions as the Proton acceptor in the catalytic mechanism.

The protein belongs to the class I-like SAM-binding methyltransferase superfamily. RNA methyltransferase RlmE family.

Its subcellular location is the cytoplasm. The catalysed reaction is uridine(2552) in 23S rRNA + S-adenosyl-L-methionine = 2'-O-methyluridine(2552) in 23S rRNA + S-adenosyl-L-homocysteine + H(+). Functionally, specifically methylates the uridine in position 2552 of 23S rRNA at the 2'-O position of the ribose in the fully assembled 50S ribosomal subunit. This is Ribosomal RNA large subunit methyltransferase E from Wolbachia sp. subsp. Brugia malayi (strain TRS).